The chain runs to 793 residues: Transcription factor castor (793 aa).

Polar residues predominate over residues 44-53 (NEDISSSTSV). 3 disordered regions span residues 44–101 (NEDI…NLIA), 199–259 (VTST…HTNA), and 272–296 (LEST…DSSY). Low complexity-rich tracts occupy residues 54-68 (QQQQ…QQPQ), 81-98 (SSQN…PNSN), and 210-221 (ATPAPSAGATAG). Position 211 is a phosphothreonine (T211). S215 carries the post-translational modification Phosphoserine. The span at 233–242 (ESADDDEDDD) shows a compositional bias: acidic residues. Positions 245 to 254 (LSSLTSCSSS) are enriched in low complexity. The segment covering 273–284 (ESTTDSLDSPSM) has biased composition (polar residues). The C2H2-type 1; atypical zinc-finger motif lies at 377 to 402 (FHCHEEPCQGKILSKKDDIIRHLKWH). 3 C2H2-type zinc fingers span residues 439-463 (YHCV…ANFH), 498-522 (YHCC…KTYH), and 556-580 (IHCV…KRKH). Residues 599–682 (EESSLDAMPQ…RLKVEDESSN (84 aa)) form a disordered region. The segment covering 608–629 (QQQQQQQQQQPTSLSQSQSSSS) has biased composition (low complexity). Residues 630 to 644 (VCGGSNTSTPLSSLS) show a composition bias toward polar residues. Residues 650–662 (ARKRGRPPKKIQL) constitute a DNA-binding region (a.T hook).

In terms of tissue distribution, expressed in a specific subset of neuroblasts in the ventral nerve cord and the procephalic region in the embryo. Expressed in many, if not all, late delaminating NBs, and in early NBs, but only after they have undergone several rounds of ganglion mother cell-producing divisions.

The protein resides in the nucleus. Its function is as follows. Transcription factor that specifies expression of key genes in developing central nervous system (CNS). Essential for many, if not all, late developing neuroblastoma (NB) sublineages. Binds to the 5'-[CG]C[CT][CT]AAAAA[AT]-3' DNA sequence, like hb, suggesting that cas and hb act as a late regulators in early and late CNS NB sublineage, respectively. Acts by repressing expression of nub/pdm-1 and pdm2/pdm-2 POU genes, and restrict their pattern of expression in appropriate cells. Required for a full expression of vvl/drifter and acj6/I-POU; it is however unknown whether it directly activates these genes. Controls engrailed (en) expression in the ventral nerve cord. The polypeptide is Transcription factor castor (cas) (Drosophila melanogaster (Fruit fly)).